Reading from the N-terminus, the 257-residue chain is Achaete-scute complex protein T3 (257 aa).

The bHLH domain occupies 83–145; it reads PSVARRNARE…RIAVEYIRGL (63 aa). Positions 161–221 are disordered; sequence YNSADESSND…SEISGGGYIK (61 aa). Low complexity-rich tracts occupy residues 165 to 184 and 193 to 213; these read DESSNDGSSYNDYNDSLDSS and QSAQSHSYHSASPTPSYSGSE.

Efficient DNA binding requires dimerization with another bHLH protein. As to expression, l(1)SC, SC and AC strongly label the presumptive stomatogastric nervous system, while ASE is more prominent in the presumptive procephalic lobe.

Its function is as follows. AS-C proteins are involved in the determination of the neuronal precursors in the peripheral nervous system and the central nervous system. The sequence is that of Achaete-scute complex protein T3 (l(1)sc) from Drosophila melanogaster (Fruit fly).